The sequence spans 79 residues: Dolichyl-diphosphooligosaccharide--protein glycosyltransferase subunit TMEM258 (79 aa).

Methionine 1 bears the N-acetylmethionine mark. 2 consecutive transmembrane segments (helical) span residues 17-37 (VFPHLTVVLLAIGMFFTAWFF) and 59-79 (VASLFMGFGVLFLLLWVGIYI).

Belongs to the OST5 family. In terms of assembly, component of the oligosaccharyltransferase (OST) complex. OST exists in two different complex forms which contain common core subunits RPN1, RPN2, OST48, OST4, DAD1 and TMEM258, either STT3A or STT3B as catalytic subunits, and form-specific accessory subunits. STT3A complex assembly occurs through the formation of 3 subcomplexes. Subcomplex 1 contains RPN1 and TMEM258, subcomplex 2 contains the STT3A-specific subunits STT3A, DC2/OSTC, and KCP2 as well as the core subunit OST4, and subcomplex 3 contains RPN2, DAD1, and OST48. The STT3A complex can form stable complexes with the Sec61 complex or with both the Sec61 and TRAP complexes.

Its subcellular location is the membrane. The protein localises to the endoplasmic reticulum. The protein resides in the cytoplasm. Its pathway is protein modification; protein glycosylation. Subunit of the oligosaccharyl transferase (OST) complex that catalyzes the initial transfer of a defined glycan (Glc(3)Man(9)GlcNAc(2) in eukaryotes) from the lipid carrier dolichol-pyrophosphate to an asparagine residue within an Asn-X-Ser/Thr consensus motif in nascent polypeptide chains, the first step in protein N-glycosylation. N-glycosylation occurs cotranslationally and the complex associates with the Sec61 complex at the channel-forming translocon complex that mediates protein translocation across the endoplasmic reticulum (ER). All subunits are required for a maximal enzyme activity. Involved in ER homeostasis in the colonic epithelium. The polypeptide is Dolichyl-diphosphooligosaccharide--protein glycosyltransferase subunit TMEM258 (Bos taurus (Bovine)).